The primary structure comprises 146 residues: Cytochrome c oxidase assembly factor 1 homolog (146 aa).

Topologically, residues 1 to 14 (MMWQKYAGSRRSMP) are mitochondrial matrix. Residues 15-37 (LGARILFHGVFYAGGFAIVYYLI) form a helical membrane-spanning segment. Over 38-146 (QKFHSRALYY…GENGDEVKKE (109 aa)) the chain is Mitochondrial intermembrane.

Belongs to the COA1 family. In terms of assembly, component of the MITRAC (mitochondrial translation regulation assembly intermediate of cytochrome c oxidase complex) complex, the core components of this complex being COA3/MITRAC12 and COX14. Interacts with COX17 and COA6. Part of the mitochondrial complex I assembly/MCIA complex that comprises at least the core subunits TMEM126B, NDUFAF1, ECSIT and ACAD9 and complement subunits such as COA1 and TMEM186.

The protein localises to the mitochondrion inner membrane. Its function is as follows. Component of the MITRAC (mitochondrial translation regulation assembly intermediate of cytochrome c oxidase complex) complex, that regulates cytochrome c oxidase assembly. MITRAC complexes regulate both translation of mitochondrial encoded components and assembly of nuclear-encoded components imported in mitochondrion. Required for assembly of mitochondrial respiratory chain complex I and complex IV. As part of the MCIA complex, required for efficient assembly of the mitochondrial complex I. In Homo sapiens (Human), this protein is Cytochrome c oxidase assembly factor 1 homolog.